The chain runs to 463 residues: MENTLVKSLYRDTDKYAGQTVQVSGWIRNLRDSKAFGFIELNDGSFFKSVQIVFDTELDNFKEIAKLPLSSSVKVEGKVIATPGAKQPFEIKAEKIDIEGLSDSDYPLQKKRHTFEYLRTIAHLRPRTNAFSATFRVRSIAAFAIHQFFQERGFVHVHTPIITGSDTEGAGEMFRVTTQDLNNVPKGEDGQVDESKDFFGKETNLTVSGQLNAEAYALAFRDVYTFGPTFRAENSNTTRHAAEFWMVEPEIAFAELGDVMNLTEDMLKYAMKYVLEHAPEEMEFFNSFVDKTVLERMNNVINSDFGRITYTEAIKVLQESGADFKYPVEWGIDLQTEHERYLSEEIFKRPVFVTDYPKDIKAFYMRLNDDGKTVAATDLLVPGIGELIGGSQREERMDVLVDRIKELGMNEEDYWWYLELRKYGGTKHAGFGLGFERFLMYITGMANIRDVIPFPRTPGSSEF.

Belongs to the class-II aminoacyl-tRNA synthetase family. Homodimer.

The protein localises to the cytoplasm. It catalyses the reaction tRNA(Asn) + L-asparagine + ATP = L-asparaginyl-tRNA(Asn) + AMP + diphosphate + H(+). The sequence is that of Asparagine--tRNA ligase from Bacillus cereus (strain ZK / E33L).